The following is a 502-amino-acid chain: Phenylacetaldehyde dehydrogenase (502 aa).

NAD(+) is bound at residue 251–256 (GSTEVG). Catalysis depends on residues Glu273 and Cys307.

It belongs to the aldehyde dehydrogenase family.

The catalysed reaction is 2-phenylacetaldehyde + NAD(+) + H2O = 2-phenylacetate + NADH + 2 H(+). Its pathway is aromatic compound metabolism. Functionally, phenylacetaldehyde dehydrogenase that catalyzes the last step in the aerobic styrene degradation pathway by mediating oxidation of phenylacetaldehyde to phenylacetic acid. This chain is Phenylacetaldehyde dehydrogenase (styD), found in Pseudomonas fluorescens.